The following is a 159-amino-acid chain: Probable chemoreceptor glutamine deamidase CheD 1 (159 aa).

Belongs to the CheD family.

The enzyme catalyses L-glutaminyl-[protein] + H2O = L-glutamyl-[protein] + NH4(+). In terms of biological role, probably deamidates glutamine residues to glutamate on methyl-accepting chemotaxis receptors (MCPs), playing an important role in chemotaxis. This chain is Probable chemoreceptor glutamine deamidase CheD 1, found in Methanosarcina acetivorans (strain ATCC 35395 / DSM 2834 / JCM 12185 / C2A).